Here is a 362-residue protein sequence, read N- to C-terminus: tRNA-specific 2-thiouridylase MnmA 3 (362 aa).

Residues 11–18 (GMSGGIDS) and Met-37 each bind ATP. The active-site Nucleophile is the Cys-91. Cys-91 and Cys-188 are oxidised to a cystine. Gly-115 contributes to the ATP binding site. Positions 137 to 139 (KDQ) are interaction with tRNA. The active-site Cysteine persulfide intermediate is Cys-188. Residues 296–297 (RY) are interaction with tRNA.

The protein belongs to the MnmA/TRMU family.

It localises to the cytoplasm. It catalyses the reaction S-sulfanyl-L-cysteinyl-[protein] + uridine(34) in tRNA + AH2 + ATP = 2-thiouridine(34) in tRNA + L-cysteinyl-[protein] + A + AMP + diphosphate + H(+). Catalyzes the 2-thiolation of uridine at the wobble position (U34) of tRNA, leading to the formation of s(2)U34. This chain is tRNA-specific 2-thiouridylase MnmA 3, found in Bacteroides fragilis (strain YCH46).